Here is a 700-residue protein sequence, read N- to C-terminus: Constitutive coactivator of peroxisome proliferator-activated receptor gamma (700 aa).

It belongs to the constitutive coactivator of PPAR-gamma family. As to quaternary structure, interacts with ESR1 and RXRA. Interacts with PPARG; in a ligand-independent manner.

The protein localises to the nucleus. Functions as a transactivator of PPARG and ESR1. Functions in adipogenesis through PPARG activation. The sequence is that of Constitutive coactivator of peroxisome proliferator-activated receptor gamma (FAM120B) from Bos taurus (Bovine).